Here is a 495-residue protein sequence, read N- to C-terminus: MASLLSPATPTATSAAFHSCSTAGFSTPTHISSQNSSLSLLSRRGCMMRCSFSPQDIPVDSLSHLPPFLDFQNSLATFSDTQKWGFFVSAGIVWFYLTARPGVLIGAIDAYLLAPLQLGLDTLIGRRLKRSDFLVTEKLGEGSFGVVYAGVLLPKNSTLVDDVRVSKARAKAMDFTGEFKQRVILKKVKVGVRGAEEFGEYEEWFNYRLSRAAPDTCAEFLGSFVADKTNTMFTKGGKWLVWRFEGDRDLADYMKDRSFPSNLESIMFGRVLQGVESVKRRALIIKQIMRQIITSLRKIHGTGIVHRDVKPANLVVTKKGQIKLIDFGAAADLRIGKNYIPERTLLDPDYCPPELYVLPEETPSPPPEPIAALLSPILWQLNSPDLFDMYSAGIVLLQMAVPTLRSTAGLKNFNLEIKSVEYDLNRWRERTRTRPDLSILDLDSGRGWDLVTKLISERGSLRRGRLSAAAALRHPYFLLGGDQAAAVLSKLSFSK.

A chloroplast-targeting transit peptide spans 1–49 (MASLLSPATPTATSAAFHSCSTAGFSTPTHISSQNSSLSLLSRRGCMMR). In terms of domain architecture, Protein kinase spans 133-477 (FLVTEKLGEG…AAAALRHPYF (345 aa)). ATP-binding positions include 139–147 (LGEGSFGVV) and Lys186. The active-site Proton acceptor is the Asp308.

This sequence belongs to the protein kinase superfamily. Ser/Thr protein kinase family.

The protein resides in the plastid. The protein localises to the chloroplast thylakoid. It carries out the reaction L-seryl-[protein] + ATP = O-phospho-L-seryl-[protein] + ADP + H(+). The catalysed reaction is L-threonyl-[protein] + ATP = O-phospho-L-threonyl-[protein] + ADP + H(+). Functionally, light-dependent serine/threonine protein kinase that specifically phosphorylates N-terminal threonine residues in psbA/D1, psbD/D2, psbC/CP43 and psbH, which are components of the core antenna complex of photosystem II. Phosphorylation of PSII core components facilitates the exchange of chlorophyll proteins between the grana and the stroma lamellae. Also involved in the phosphorylation of the calcium-sensing receptor (CaS). This is Serine/threonine-protein kinase STN8, chloroplastic (STN8) from Arabidopsis thaliana (Mouse-ear cress).